Reading from the N-terminus, the 515-residue chain is 2-isopropylmalate synthase (515 aa).

In terms of domain architecture, Pyruvate carboxyltransferase spans 5–267 (VIIFDTTLRD…STGIKHEEIH (263 aa)). Residues Asp-14, His-202, His-204, and Asn-238 each contribute to the Mn(2+) site. Residues 392 to 515 (KLNYLSVQSG…EMKQKKIATV (124 aa)) form a regulatory domain region.

This sequence belongs to the alpha-IPM synthase/homocitrate synthase family. LeuA type 1 subfamily. In terms of assembly, homodimer. It depends on Mn(2+) as a cofactor.

The protein localises to the cytoplasm. It catalyses the reaction 3-methyl-2-oxobutanoate + acetyl-CoA + H2O = (2S)-2-isopropylmalate + CoA + H(+). The protein operates within amino-acid biosynthesis; L-leucine biosynthesis; L-leucine from 3-methyl-2-oxobutanoate: step 1/4. Functionally, catalyzes the condensation of the acetyl group of acetyl-CoA with 3-methyl-2-oxobutanoate (2-ketoisovalerate) to form 3-carboxy-3-hydroxy-4-methylpentanoate (2-isopropylmalate). The polypeptide is 2-isopropylmalate synthase (Vibrio parahaemolyticus serotype O3:K6 (strain RIMD 2210633)).